The sequence spans 287 residues: CRISPR-associated endoribonuclease Cas6 1 (287 aa).

This sequence belongs to the CRISPR-associated endoribonuclease Cas6 family. Part of the aCascade ribonucleoprotein complex, minimally composed of Csa2 and Cas5a, which binds crRNA. Other possible components of aCascade in strain P1 are Cas6b (SSO1437) and Csa5 (SSO1443), while SSO1399, Cas5b (SSO1400) and SSO1401 have sometimes been seen weakly associated. Csa2 is probably the major RNA-binding subunit. The Csa2-Cas5a-crRNA complex also binds target DNA homologous to crRNA, probably forming an R-loop. Purified aCascade forms a filament about 6 nm in width.

In terms of biological role, CRISPR (clustered regularly interspaced short palindromic repeat) is an adaptive immune system that provides protection against mobile genetic elements (viruses, transposable elements and conjugative plasmids). CRISPR clusters contain spacers, sequences complementary to antecedent mobile elements, and target invading nucleic acids. CRISPR clusters are transcribed and processed into CRISPR RNA (crRNA). This is CRISPR-associated endoribonuclease Cas6 1 (cas6a) from Saccharolobus solfataricus (strain ATCC 35092 / DSM 1617 / JCM 11322 / P2) (Sulfolobus solfataricus).